Reading from the N-terminus, the 289-residue chain is Ribosomal RNA small subunit methyltransferase A (289 aa).

S-adenosyl-L-methionine-binding residues include Asn21, Leu23, Gly48, Glu69, Asp94, and Asn120.

The protein belongs to the class I-like SAM-binding methyltransferase superfamily. rRNA adenine N(6)-methyltransferase family. RsmA subfamily.

It localises to the cytoplasm. It catalyses the reaction adenosine(1518)/adenosine(1519) in 16S rRNA + 4 S-adenosyl-L-methionine = N(6)-dimethyladenosine(1518)/N(6)-dimethyladenosine(1519) in 16S rRNA + 4 S-adenosyl-L-homocysteine + 4 H(+). In terms of biological role, specifically dimethylates two adjacent adenosines (A1518 and A1519) in the loop of a conserved hairpin near the 3'-end of 16S rRNA in the 30S particle. May play a critical role in biogenesis of 30S subunits. The chain is Ribosomal RNA small subunit methyltransferase A from Actinobacillus pleuropneumoniae serotype 7 (strain AP76).